The chain runs to 236 residues: Probable apoptosis inhibitor 2 (236 aa).

One copy of the BIR repeat lies at 85–150 (RKRSFASFKW…AHAADCAFRR (66 aa)). Residues C123, C126, H142, and C146 each contribute to the Zn(2+) site. Residues 189–223 (CKVCFVNEKSVCFLPCRHLVVCAECSPRCKRCCVC) form an RING-type zinc finger.

The polypeptide is Probable apoptosis inhibitor 2 (IAP2) (Orgyia pseudotsugata multicapsid polyhedrosis virus (OpMNPV)).